The primary structure comprises 214 residues: Large ribosomal subunit protein uL1 (214 aa).

This sequence belongs to the universal ribosomal protein uL1 family. In terms of assembly, component of the large ribosomal subunit.

Its subcellular location is the cytoplasm. Functionally, component of the large ribosomal subunit. The ribosome is a large ribonucleoprotein complex responsible for the synthesis of proteins in the cell. The protein is Large ribosomal subunit protein uL1 (RPL10A) of Entamoeba histolytica (strain ATCC 30459 / HM-1:IMSS / ABRM).